A 476-amino-acid polypeptide reads, in one-letter code: Sulfite exporter TauE/SafE family protein 3 (476 aa).

The next 12 helical transmembrane spans lie at 8–28 (WLGLRSVTIFLINFSLAFAFV), 76–92 (FNWQIVLGTLVGFFGAA), 99–115 (VGGGGIFVPMLSLIIGF), 120–142 (ATAISKCMIMGASVSTVYYNLRL), 151–171 (IIDYDLALLIQPMLMLGISIG), 172–192 (VAFNVIFPDWLVTVLLIVLFL), 257–277 (VYWKELGLLVFVWIVFLALQI), 291–311 (VINLLQIPVAVGVSGYEAVAL), 339–359 (FGIIAGIVGGLLGLGGGFIMG), 360–380 (PLFLELGVPPQVSSATATFAM), 397–417 (FPVPYALYLVGVATIAAWVGQ), and 433–453 (IIFILASMIFISAISLGGVGI).

It belongs to the 4-toluene sulfonate uptake permease (TSUP) (TC 2.A.102) family.

Its subcellular location is the membrane. This chain is Sulfite exporter TauE/SafE family protein 3, found in Arabidopsis thaliana (Mouse-ear cress).